The primary structure comprises 421 residues: Forkhead box protein J1 (421 aa).

Disordered regions lie at residues 1–32 (MAES…LDDS) and 77–110 (ADPA…PPPD). Over residues 11-21 (AGPGEEAGPEG) the composition is skewed to gly residues. Residues 90 to 99 (KPTSSCTSRS) are compositionally biased toward polar residues. The segment at residues 120–210 (VKPPYSYATL…YAERLLSGAF (91 aa)) is a DNA-binding region (fork-head).

Belongs to the FOXJ1 family. As to expression, predominantly expressed in tissues containing motile cilia.

The protein localises to the nucleus. Its function is as follows. Transcription factor specifically required for the formation of motile cilia. Acts by activating transcription of genes that mediate assembly of motile cilia, such as CFAP157. Binds the DNA consensus sequences 5'-HWDTGTTTGTTTA-3' or 5'-KTTTGTTGTTKTW-3' (where H is not G, W is A or T, D is not C, and K is G or T). Activates the transcription of a variety of ciliary proteins in the developing brain and lung. This Mus musculus (Mouse) protein is Forkhead box protein J1.